The sequence spans 109 residues: uncharacterized protein (109 aa).

The protein resides in the mitochondrion. This is an uncharacterized protein from Arabidopsis thaliana (Mouse-ear cress).